We begin with the raw amino-acid sequence, 376 residues long: Glutamate 5-kinase (376 aa).

Position 15 (K15) interacts with ATP. Residues S56, D143, and N155 each contribute to the substrate site. 175–176 lines the ATP pocket; it reads SD. The 78-residue stretch at 281–358 folds into the PUA domain; that stretch reads KGTLTIDAGA…PDVMSILGVS (78 aa).

It belongs to the glutamate 5-kinase family.

The protein localises to the cytoplasm. The enzyme catalyses L-glutamate + ATP = L-glutamyl 5-phosphate + ADP. It functions in the pathway amino-acid biosynthesis; L-proline biosynthesis; L-glutamate 5-semialdehyde from L-glutamate: step 1/2. Its function is as follows. Catalyzes the transfer of a phosphate group to glutamate to form L-glutamate 5-phosphate. The chain is Glutamate 5-kinase from Rhodopseudomonas palustris (strain HaA2).